The following is a 145-amino-acid chain: Small ribosomal subunit protein uS9 (145 aa).

It belongs to the universal ribosomal protein uS9 family.

The protein resides in the cytoplasm. In Fritillaria agrestis (Stinkbells), this protein is Small ribosomal subunit protein uS9 (RPS16).